We begin with the raw amino-acid sequence, 154 residues long: 6,7-dimethyl-8-ribityllumazine synthase (154 aa).

5-amino-6-(D-ribitylamino)uracil-binding positions include Phe-22, 56–58 (AFE), and 80–82 (TVI). 85 to 86 (AT) is a binding site for (2S)-2-hydroxy-3-oxobutyl phosphate. The active-site Proton donor is His-88. Phe-113 lines the 5-amino-6-(D-ribitylamino)uracil pocket. Arg-127 contributes to the (2S)-2-hydroxy-3-oxobutyl phosphate binding site.

This sequence belongs to the DMRL synthase family. As to quaternary structure, forms an icosahedral capsid composed of 60 subunits, arranged as a dodecamer of pentamers.

The enzyme catalyses (2S)-2-hydroxy-3-oxobutyl phosphate + 5-amino-6-(D-ribitylamino)uracil = 6,7-dimethyl-8-(1-D-ribityl)lumazine + phosphate + 2 H2O + H(+). It participates in cofactor biosynthesis; riboflavin biosynthesis; riboflavin from 2-hydroxy-3-oxobutyl phosphate and 5-amino-6-(D-ribitylamino)uracil: step 1/2. Functionally, catalyzes the formation of 6,7-dimethyl-8-ribityllumazine by condensation of 5-amino-6-(D-ribitylamino)uracil with 3,4-dihydroxy-2-butanone 4-phosphate. This is the penultimate step in the biosynthesis of riboflavin. This Bacillus amyloliquefaciens (Bacillus velezensis) protein is 6,7-dimethyl-8-ribityllumazine synthase.